Here is a 125-residue protein sequence, read N- to C-terminus: Small ribosomal subunit protein uS12 (125 aa).

D89 carries the 3-methylthioaspartic acid modification.

This sequence belongs to the universal ribosomal protein uS12 family. As to quaternary structure, part of the 30S ribosomal subunit. Contacts proteins S8 and S17. May interact with IF1 in the 30S initiation complex.

In terms of biological role, with S4 and S5 plays an important role in translational accuracy. Its function is as follows. Interacts with and stabilizes bases of the 16S rRNA that are involved in tRNA selection in the A site and with the mRNA backbone. Located at the interface of the 30S and 50S subunits, it traverses the body of the 30S subunit contacting proteins on the other side and probably holding the rRNA structure together. The combined cluster of proteins S8, S12 and S17 appears to hold together the shoulder and platform of the 30S subunit. The chain is Small ribosomal subunit protein uS12 from Bordetella petrii (strain ATCC BAA-461 / DSM 12804 / CCUG 43448).